The primary structure comprises 148 residues: uncharacterized protein (148 aa).

The HTH asnC-type domain maps to 4–65; that stretch reads MDKVDLQLIK…IPNLEKLNYM (62 aa). Residues 23 to 42 constitute a DNA-binding region (H-T-H motif); that stretch reads YRELAEMLGTTRQRVARKVD.

This is an uncharacterized protein from Pyrococcus furiosus (strain ATCC 43587 / DSM 3638 / JCM 8422 / Vc1).